The sequence spans 322 residues: GDSL esterase/lipase At2g04020 (322 aa).

A signal peptide spans 1-26; that stretch reads MGLPSSLESYLLLILLSFLNVSTIYS. Ser50 serves as the catalytic Nucleophile. N-linked (GlcNAc...) asparagine glycosylation occurs at Asn260. Residues Asp296 and His299 contribute to the active site.

It belongs to the 'GDSL' lipolytic enzyme family.

The protein resides in the secreted. This is GDSL esterase/lipase At2g04020 from Arabidopsis thaliana (Mouse-ear cress).